Consider the following 617-residue polypeptide: Thioredoxin reductase (617 aa).

Residues 127 to 128 (PG), 147 to 150 (DYVK), 163 to 164 (TC), 168 to 172 (GCVPK), alanine 237, aspartate 433, and 440 to 442 (ELA) each bind FAD. Cysteine 164 and cysteine 169 are joined by a disulfide. A loop important for the interaction with TRX1 region spans residues 514–528 (HRQKHIRAQKDEYDL). Histidine 585 contributes to the FAD binding site. Histidine 585 (proton acceptor) is an active-site residue. The cysteines at positions 611 and 616 are disulfide-linked.

The protein belongs to the class-I pyridine nucleotide-disulfide oxidoreductase family. In terms of assembly, homodimer. FAD serves as cofactor.

It is found in the mitochondrion. It localises to the cytoplasm. It catalyses the reaction [thioredoxin]-dithiol + NADP(+) = [thioredoxin]-disulfide + NADPH + H(+). Functionally, catalyzes the transfer of electrons from NADPH to thioredoxins TRX1, TRX2 and TRX3, which in turn act as reductants of disulfide containing proteins. Able to reduce nitroglutathione (GSNO), a compound involved in the transport of nitric oxide (NO); however, TRX1 is more efficient in reducing GSNO. Has no catalytic activity towards oxidized glutathione (GSSG). This chain is Thioredoxin reductase, found in Plasmodium falciparum (isolate 3D7).